A 259-amino-acid chain; its full sequence is 1,2-dihydroxy-1,2-dihydronaphthalene dehydrogenase (259 aa).

8 to 32 is a binding site for NAD(+); sequence SITGAGSGIGLELVRSFKSAGYYVS. Residue Ser-140 coordinates substrate. The active-site Proton acceptor is Tyr-153.

This sequence belongs to the short-chain dehydrogenases/reductases (SDR) family.

The catalysed reaction is (1R,2S)-1,2-dihydronaphthalene-1,2-diol + NAD(+) = naphthalene-1,2-diol + NADH + H(+). The enzyme catalyses cis-1,2-dihydroxy-1,2-dihydrodibenzothiophene + NAD(+) = 1,2-dihydroxydibenzothiophene + NADH + H(+). It participates in aromatic compound metabolism; naphthalene degradation. Its function is as follows. Catalyzes the oxidation of naphthalene dihydrodiol into 1,2-dihydroxynaphthalene. This is 1,2-dihydroxy-1,2-dihydronaphthalene dehydrogenase (nahB) from Pseudomonas putida (Arthrobacter siderocapsulatus).